Reading from the N-terminus, the 124-residue chain is Small ribosomal subunit protein eS25 (124 aa).

Residues 1-22 show a composition bias toward basic and acidic residues; that stretch reads MPPKDSKQKKDAGKSKKDKDPV. The tract at residues 1-37 is disordered; it reads MPPKDSKQKKDAGKSKKDKDPVNKSGGKAKKKKWSKG. Basic residues predominate over residues 27–37; sequence GKAKKKKWSKG.

It belongs to the eukaryotic ribosomal protein eS25 family. As to quaternary structure, component of the small ribosomal subunit.

It is found in the cytoplasm. Component of the small ribosomal subunit. The ribosome is a large ribonucleoprotein complex responsible for the synthesis of proteins in the cell. The protein is Small ribosomal subunit protein eS25 (rps25) of Danio rerio (Zebrafish).